The following is a 365-amino-acid chain: Chorismate synthase (365 aa).

NADP(+)-binding residues include R48 and R54. FMN-binding positions include 125-127 (RSS), 238-239 (NA), G278, 293-297 (KPTSS), and R319.

It belongs to the chorismate synthase family. As to quaternary structure, homotetramer. FMNH2 is required as a cofactor.

The enzyme catalyses 5-O-(1-carboxyvinyl)-3-phosphoshikimate = chorismate + phosphate. It participates in metabolic intermediate biosynthesis; chorismate biosynthesis; chorismate from D-erythrose 4-phosphate and phosphoenolpyruvate: step 7/7. Functionally, catalyzes the anti-1,4-elimination of the C-3 phosphate and the C-6 proR hydrogen from 5-enolpyruvylshikimate-3-phosphate (EPSP) to yield chorismate, which is the branch point compound that serves as the starting substrate for the three terminal pathways of aromatic amino acid biosynthesis. This reaction introduces a second double bond into the aromatic ring system. In Janthinobacterium sp. (strain Marseille) (Minibacterium massiliensis), this protein is Chorismate synthase.